The sequence spans 445 residues: Sterile alpha motif domain-containing protein 7 (445 aa).

Residues 98-172 (HAARAEMEMY…HLQGNPILLA (75 aa)) form a required for localization to nuclear polycomb bodies region. A disordered region spans residues 193 to 282 (YQKPPESDTE…WDDGKGKPSE (90 aa)). Residues 227 to 244 (IKDPDIEVDNQQKPRVAD) show a composition bias toward basic and acidic residues. The SAM domain occupies 324–378 (WTVDDVYNFIRSLPGCSDYAQVFKDHAIDGETLPLLTEQHLRGTMGLKLGPALKI). The segment at 425 to 445 (SIPGPQDLLSPKRTEQDVMRN) is disordered. Residues 434 to 445 (SPKRTEQDVMRN) are compositionally biased toward basic and acidic residues.

As to quaternary structure, monomer, homodimer and homooligomer. Component of a Polycomb group (PcG) multiprotein PRC1-like complex. Interacts with PHC2 and NR2E3. Interacts with RNF1 in a PHC2-dependent manner. Interacts with SAMD11. As to expression, expressed in the retina and the pineal gland. In the retina, it is predominantly expressed in the outer nuclear layer and developing rod photoreceptors.

It localises to the nucleus. The protein localises to the cytoplasm. Component of a Polycomb group (PcG) multiprotein PRC1-like complex, essential for establishing rod photoreceptor cell identity and function by silencing nonrod gene expression in developing rod photoreceptor cells. Via its association with the PRC1-like complex, promotes epigenetic repressive marks H3K27me3 and H2AK119ub marks in nonrod genes, silencing their transcription. Represses Crx-controlled photoreceptor-specific gene expression. The polypeptide is Sterile alpha motif domain-containing protein 7 (Samd7) (Mus musculus (Mouse)).